We begin with the raw amino-acid sequence, 257 residues long: GTP cyclohydrolase FolE2 (257 aa).

It belongs to the GTP cyclohydrolase IV family.

The enzyme catalyses GTP + H2O = 7,8-dihydroneopterin 3'-triphosphate + formate + H(+). Its pathway is cofactor biosynthesis; 7,8-dihydroneopterin triphosphate biosynthesis; 7,8-dihydroneopterin triphosphate from GTP: step 1/1. Its function is as follows. Converts GTP to 7,8-dihydroneopterin triphosphate. The protein is GTP cyclohydrolase FolE2 of Kosmotoga olearia (strain ATCC BAA-1733 / DSM 21960 / TBF 19.5.1).